A 543-amino-acid polypeptide reads, in one-letter code: CTP synthase (543 aa).

The tract at residues 1-267 (MAKFVFVTGG…CREVLDVLNL (267 aa)) is amidoligase domain. Serine 13 serves as a coordination point for CTP. Residue serine 13 participates in UTP binding. 14 to 19 (SIGKGI) lines the ATP pocket. Tyrosine 54 serves as a coordination point for L-glutamine. Aspartate 71 contacts ATP. Residues aspartate 71 and glutamate 141 each coordinate Mg(2+). Residues 148–150 (DIE), 188–193 (KTKPTQ), and lysine 224 each bind CTP. Residues 188-193 (KTKPTQ) and lysine 224 each bind UTP. In terms of domain architecture, Glutamine amidotransferase type-1 spans 292-534 (KVALVGKYVQ…IEAAQQRLPN (243 aa)). Position 354 (glycine 354) interacts with L-glutamine. Catalysis depends on cysteine 381, which acts as the Nucleophile; for glutamine hydrolysis. L-glutamine is bound by residues 382 to 385 (LGMQ), glutamate 405, and arginine 462. Catalysis depends on residues histidine 507 and glutamate 509.

The protein belongs to the CTP synthase family. In terms of assembly, homotetramer.

The enzyme catalyses UTP + L-glutamine + ATP + H2O = CTP + L-glutamate + ADP + phosphate + 2 H(+). It catalyses the reaction L-glutamine + H2O = L-glutamate + NH4(+). It carries out the reaction UTP + NH4(+) + ATP = CTP + ADP + phosphate + 2 H(+). It functions in the pathway pyrimidine metabolism; CTP biosynthesis via de novo pathway; CTP from UDP: step 2/2. Allosterically activated by GTP, when glutamine is the substrate; GTP has no effect on the reaction when ammonia is the substrate. The allosteric effector GTP functions by stabilizing the protein conformation that binds the tetrahedral intermediate(s) formed during glutamine hydrolysis. Inhibited by the product CTP, via allosteric rather than competitive inhibition. Catalyzes the ATP-dependent amination of UTP to CTP with either L-glutamine or ammonia as the source of nitrogen. Regulates intracellular CTP levels through interactions with the four ribonucleotide triphosphates. This is CTP synthase from Synechococcus sp. (strain WH7803).